The following is a 317-amino-acid chain: Melanocyte-stimulating hormone receptor (317 aa).

Topologically, residues 1–37 are extracellular; that stretch reads MPVQGSQRRLLGSLNSTPTATPRLGLAANQTGARCLE. Asn-29 carries N-linked (GlcNAc...) asparagine glycosylation. Residues 38–63 form a helical membrane-spanning segment; it reads VSIPDGLFLSLGLVSLVENVLVVVAI. Residues 64 to 72 are Cytoplasmic-facing; the sequence is ARNRNLHSP. The helical transmembrane segment at 73-93 threads the bilayer; sequence MYCFICCLALSDLLVSGSNML. Residues 94-118 lie on the Extracellular side of the membrane; sequence ETAVFLLLEAGALAARAAVVQQLDN. The chain crosses the membrane as a helical span at residues 119 to 140; that stretch reads VIDVITCSSMLSSLCFLGAIAV. Topologically, residues 141–163 are cytoplasmic; it reads DRYISIFYALRYHSIVTLRRARR. Residues 164–183 traverse the membrane as a helical segment; that stretch reads VVAAIWVASVLFSTLFIAYC. Over 184–191 the chain is Extracellular; that stretch reads DHAAVLLC. A helical transmembrane segment spans residues 192 to 211; sequence LVVFFLAMLVLMAVLYVHML. Over 212-240 the chain is Cytoplasmic; that stretch reads ARACQHAQGIAQLHKRQRPAHQGVGLKGA. Residues 241–266 form a helical membrane-spanning segment; sequence ATLTILLGIFFLCWGPFFLHLTLIVL. The Extracellular segment spans residues 267–279; it reads CPQHPTCSCIFKN. A helical transmembrane segment spans residues 280-300; it reads FNLFLTLIICNAIIDPLIYAF. Over 301–317 the chain is Cytoplasmic; sequence RSQELRRTLKKVLLCSW. A lipid anchor (S-palmitoyl cysteine) is attached at Cys-315.

It belongs to the G-protein coupled receptor 1 family. Interacts with MGRN1, but does not undergo MGRN1-mediated ubiquitination; this interaction competes with GNAS-binding and thus inhibits agonist-induced cAMP production. Interacts with OPN3; the interaction results in a decrease in MC1R-mediated cAMP signaling and ultimately a decrease in melanin production in melanocytes.

It is found in the cell membrane. Functionally, receptor for MSH (alpha, beta and gamma) and ACTH. The activity of this receptor is mediated by G proteins which activate adenylate cyclase. Mediates melanogenesis, the production of eumelanin (black/brown) and phaeomelanin (red/yellow), via regulation of cAMP signaling in melanocytes. This chain is Melanocyte-stimulating hormone receptor (MC1R), found in Trachypithecus obscurus (Dusky leaf-monkey).